A 303-amino-acid polypeptide reads, in one-letter code: Biphenyl-2,3-diol 1,2-dioxygenase (303 aa).

VOC domains follow at residues 5-119 and 143-264; these read SLGY…IYYG and GLGH…YGWS. His-146, His-210, and Glu-260 together coordinate Fe cation. The disordered stretch occupies residues 283–303; it reads WGHKSVRDKALRATKHEQQPE. A compositionally biased stretch (basic and acidic residues) spans 287–303; that stretch reads SVRDKALRATKHEQQPE.

The protein belongs to the extradiol ring-cleavage dioxygenase family. In terms of assembly, homooctamer. Requires Fe(2+) as cofactor.

It catalyses the reaction biphenyl-2,3-diol + O2 = 2-hydroxy-6-oxo-6-phenylhexa-2,4-dienoate + H(+). It participates in xenobiotic degradation; biphenyl degradation; 2-hydroxy-2,4-pentadienoate and benzoate from biphenyl: step 3/4. The chain is Biphenyl-2,3-diol 1,2-dioxygenase (bphC) from Metapseudomonas furukawaii (Pseudomonas furukawaii).